The sequence spans 591 residues: Calnexin (591 aa).

Residues 1–20 (MEGKWLLCLLLVLGTAAVEA) form the signal peptide. At 21–482 (HDGHDDDAID…QMLEAAEERP (462 aa)) the chain is on the lumenal side. Residues Ser-75 and Asp-118 each coordinate Ca(2+). Lys-138 is subject to N6-acetyllysine. Cys-161 and Cys-195 form a disulfide bridge. An alpha-D-glucoside contacts are provided by Tyr-165, Lys-167, Tyr-186, and Asp-193. Positions 261–347 (GNLLNDMTPP…EKPEDWDEDM (87 aa)) are disordered. The segment covering 275-320 (REIEDPEDRKPEDWDERPKIADPDAVKPDDWDEDAPSKIPDEEATK) has biased composition (basic and acidic residues). The segment at 277 to 410 (IEDPEDRKPE…RKIPNPDFFE (134 aa)) is p domain (Extended arm). Repeat copies occupy residues 279–291 (DPEDRKPEDWDER), 296–308 (DPDAVKPDDWDED), 315–327 (DEEATKPEGWLDD), 334–346 (DPDAEKPEDWDED), and 349–359 (GEWEAPQIANP). 2 4 X approximate repeats regions span residues 279–346 (DPED…WDED) and 349–406 (GEWE…IPNP). The segment covering 324 to 347 (WLDDEPEYIPDPDAEKPEDWDEDM) has biased composition (acidic residues). The interaction with PPIB stretch occupies residues 327 to 360 (DEPEYIPDPDAEKPEDWDEDMDGEWEAPQIANPK). Cysteines 361 and 367 form a disulfide. Tandem repeats lie at residues 368 to 378 (GVWQRPMIDNP), 382 to 392 (GKWKPPMIDNP), and 396 to 406 (GIWKPRKIPNP). Glu-426 contacts an alpha-D-glucoside. Residue Asp-437 coordinates Ca(2+). A helical membrane pass occupies residues 483–503 (WLWVVYILTVALPVFLVILFC). S-palmitoyl cysteine attachment occurs at residues Cys-503 and Cys-504. Residues 504–591 (CSGKKQSNAM…SPRNRKPRRE (88 aa)) are Cytoplasmic-facing. The interval 504-591 (CSGKKQSNAM…SPRNRKPRRE (88 aa)) is sufficient to mediate interaction with SGIP1. Over residues 514-539 (EYKKTDAPQPDVKDEEGKEEEKNKRD) the composition is skewed to basic and acidic residues. A disordered region spans residues 514–591 (EYKKTDAPQP…SPRNRKPRRE (78 aa)). Phosphoserine is present on Ser-553. The span at 555–568 (AEEDGVTGSQDEED) shows a compositional bias: acidic residues. Thr-561 is modified (phosphothreonine). The residue at position 563 (Ser-563) is a Phosphoserine; by MAPK3. Position 582 is a phosphoserine (Ser-582).

The protein belongs to the calreticulin family. Interacts with MAPK3/ERK1. Interacts with KCNH2. Associates with ribosomes. The palmitoylated form interacts with the ribosome-translocon complex component SSR1, promoting efficient folding of glycoproteins. Interacts with SERPINA2P/SERPINA2 and with the S and Z variants of SERPINA1. Interacts with SGIP1; involved in negative regulation of endocytosis. Interacts with PPIB. Interacts with SMIM22. Interacts with TMX2. Interacts with TMEM35A/NACHO. Interacts with CHRNA7. Interacts with reticulophagy regulators RETREG2 and RETREG3. Interacts with DNM1L; may form part of a larger protein complex at the ER-mitochondrial interface during mitochondrial fission. Interacts with ADAM7. Phosphorylated at Ser-563 by MAPK3/ERK1. Phosphorylation by MAPK3/ERK1 increases its association with ribosomes. In terms of processing, palmitoylation by DHHC6 leads to the preferential localization to the perinuclear rough ER. It mediates the association of calnexin with the ribosome-translocon complex (RTC) which is required for efficient folding of glycosylated proteins. Post-translationally, ubiquitinated, leading to proteasomal degradation. Probably ubiquitinated by ZNRF4. As to expression, expressed in sperm (at protein level).

The protein resides in the endoplasmic reticulum membrane. Its subcellular location is the mitochondrion membrane. It localises to the melanosome membrane. Calcium-binding protein that interacts with newly synthesized monoglucosylated glycoproteins in the endoplasmic reticulum. It may act in assisting protein assembly and/or in the retention within the ER of unassembled protein subunits. It seems to play a major role in the quality control apparatus of the ER by the retention of incorrectly folded proteins. Associated with partial T-cell antigen receptor complexes that escape the ER of immature thymocytes, it may function as a signaling complex regulating thymocyte maturation. Additionally it may play a role in receptor-mediated endocytosis at the synapse. In Mus musculus (Mouse), this protein is Calnexin (Canx).